The sequence spans 225 residues: Nuclear protein UL4 homolog (225 aa).

The protein belongs to the alphaherpesvirinae HHV-1 UL4 family.

The protein localises to the host nucleus. The polypeptide is Nuclear protein UL4 homolog (Equus caballus (Horse)).